The primary structure comprises 266 residues: 3-methyl-2-oxobutanoate hydroxymethyltransferase (266 aa).

2 residues coordinate Mg(2+): D43 and D82. 3-methyl-2-oxobutanoate-binding positions include 43–44, D82, and K110; that span reads DS. Position 112 (E112) interacts with Mg(2+). The active-site Proton acceptor is E179.

Belongs to the PanB family. Homodecamer; pentamer of dimers. It depends on Mg(2+) as a cofactor.

It is found in the cytoplasm. The enzyme catalyses 3-methyl-2-oxobutanoate + (6R)-5,10-methylene-5,6,7,8-tetrahydrofolate + H2O = 2-dehydropantoate + (6S)-5,6,7,8-tetrahydrofolate. It functions in the pathway cofactor biosynthesis; (R)-pantothenate biosynthesis; (R)-pantoate from 3-methyl-2-oxobutanoate: step 1/2. In terms of biological role, catalyzes the reversible reaction in which hydroxymethyl group from 5,10-methylenetetrahydrofolate is transferred onto alpha-ketoisovalerate to form ketopantoate. The protein is 3-methyl-2-oxobutanoate hydroxymethyltransferase of Psychrobacter arcticus (strain DSM 17307 / VKM B-2377 / 273-4).